The following is a 314-amino-acid chain: Ecto-ADP-ribosyltransferase 4 (314 aa).

The signal sequence occupies residues 1–46 (MGPLINRCKKILLPTTVPPATMRIWLLGGLLPFLLLLSGLQRPTEG). Cystine bridges form between C69/C280 and C182/C231. Positions 91 to 276 (KNYFRMWQKA…LQLRSTGNLS (186 aa)) constitute a TR mART core domain. A glycan (N-linked (GlcNAc...) asparagine) is linked at N114. Y126 serves as a coordination point for NAD(+). Residue N178 is glycosylated (N-linked (GlcNAc...) asparagine). Q206 contributes to the NAD(+) binding site. An N-linked (GlcNAc...) asparagine glycan is attached at N222. Residue S240 participates in NAD(+) binding. N-linked (GlcNAc...) asparagine glycans are attached at residues N257 and N274. A lipid anchor (GPI-anchor amidated alanine) is attached at A285. The propeptide at 286 to 314 (SSKKCIPDPIAIASLSFLTSVIIFSKSRV) is removed in mature form.

This sequence belongs to the Arg-specific ADP-ribosyltransferase family. As to expression, expressed in spleen and T-cells.

It localises to the cell membrane. The catalysed reaction is L-arginyl-[protein] + NAD(+) = N(omega)-(ADP-D-ribosyl)-L-arginyl-[protein] + nicotinamide + H(+). The protein is Ecto-ADP-ribosyltransferase 4 (ART4) of Homo sapiens (Human).